We begin with the raw amino-acid sequence, 24 residues long: Attacin (24 aa).

This sequence belongs to the attacin/sarcotoxin-2 family.

The protein resides in the secreted. Functionally, hemolymph antibacterial protein. The chain is Attacin from Heliothis virescens (Tobacco budworm moth).